Here is a 544-residue protein sequence, read N- to C-terminus: Chaperonin GroEL (544 aa).

Residues 29–32, Lys50, 86–90, Gly414, and Asp494 each bind ATP; these read TLGP and DGTTT.

Belongs to the chaperonin (HSP60) family. Forms a cylinder of 14 subunits composed of two heptameric rings stacked back-to-back. Interacts with the co-chaperonin GroES.

It localises to the cytoplasm. The catalysed reaction is ATP + H2O + a folded polypeptide = ADP + phosphate + an unfolded polypeptide.. Together with its co-chaperonin GroES, plays an essential role in assisting protein folding. The GroEL-GroES system forms a nano-cage that allows encapsulation of the non-native substrate proteins and provides a physical environment optimized to promote and accelerate protein folding. This Amoebophilus asiaticus (strain 5a2) protein is Chaperonin GroEL.